The primary structure comprises 120 residues: Glycine cleavage system H protein (120 aa).

Positions 17–99 (VATVGITAHA…MGAGWFFKLK (83 aa)) constitute a Lipoyl-binding domain. Position 58 is an N6-lipoyllysine (K58).

This sequence belongs to the GcvH family. In terms of assembly, the glycine cleavage system is composed of four proteins: P, T, L and H. The cofactor is (R)-lipoate.

Functionally, the glycine cleavage system catalyzes the degradation of glycine. The H protein shuttles the methylamine group of glycine from the P protein to the T protein. In Rhizobium rhizogenes (strain K84 / ATCC BAA-868) (Agrobacterium radiobacter), this protein is Glycine cleavage system H protein.